A 309-amino-acid polypeptide reads, in one-letter code: Oxygen-dependent coproporphyrinogen-III oxidase (309 aa).

Ser-94 is a binding site for substrate. A divalent metal cation-binding residues include His-98 and His-108. His-108 functions as the Proton donor in the catalytic mechanism. 110–112 (NVR) is a binding site for substrate. A divalent metal cation contacts are provided by His-147 and His-177. The important for dimerization stretch occupies residues 242–277 (YVEFNLVWDRGTLFGLQTGGRTESILMSLPPLVRWE). 260 to 262 (GGR) contacts substrate.

The protein belongs to the aerobic coproporphyrinogen-III oxidase family. Homodimer. The cofactor is a divalent metal cation.

It localises to the cytoplasm. It catalyses the reaction coproporphyrinogen III + O2 + 2 H(+) = protoporphyrinogen IX + 2 CO2 + 2 H2O. It functions in the pathway porphyrin-containing compound metabolism; protoporphyrin-IX biosynthesis; protoporphyrinogen-IX from coproporphyrinogen-III (O2 route): step 1/1. Involved in the heme biosynthesis. Catalyzes the aerobic oxidative decarboxylation of propionate groups of rings A and B of coproporphyrinogen-III to yield the vinyl groups in protoporphyrinogen-IX. This chain is Oxygen-dependent coproporphyrinogen-III oxidase, found in Yersinia pseudotuberculosis serotype O:1b (strain IP 31758).